A 500-amino-acid chain; its full sequence is NADH-quinone oxidoreductase subunit N (500 aa).

Transmembrane regions (helical) follow at residues 13 to 33 (VMMP…IDLF), 42 to 62 (LLGL…LSLW), 79 to 99 (FAKS…LLSI), 111 to 131 (GEFY…ASSG), 133 to 153 (LITL…LVAI), 168 to 188 (VITG…IFGF), 211 to 231 (YVLS…LASA), 245 to 265 (TTPV…VIVL), 281 to 301 (ASML…TMII), 321 to 341 (VAHA…MFEA), 342 to 362 (IWFY…ILQV), 386 to 406 (AIAM…AGFI), 424 to 444 (VLAS…FGIF), and 461 to 481 (PPGV…LGVF).

Belongs to the complex I subunit 2 family. NDH-1 is composed of 14 different subunits. Subunits NuoA, H, J, K, L, M, N constitute the membrane sector of the complex.

It is found in the cell membrane. The catalysed reaction is a quinone + NADH + 5 H(+)(in) = a quinol + NAD(+) + 4 H(+)(out). NDH-1 shuttles electrons from NADH, via FMN and iron-sulfur (Fe-S) centers, to quinones in the respiratory chain. The immediate electron acceptor for the enzyme in this species is believed to be a menaquinone. Couples the redox reaction to proton translocation (for every two electrons transferred, four hydrogen ions are translocated across the cytoplasmic membrane), and thus conserves the redox energy in a proton gradient. This is NADH-quinone oxidoreductase subunit N from Anoxybacillus flavithermus (strain DSM 21510 / WK1).